The chain runs to 342 residues: Phosphate acyltransferase (342 aa).

Belongs to the PlsX family. In terms of assembly, homodimer. Probably interacts with PlsY.

It is found in the cytoplasm. The enzyme catalyses a fatty acyl-[ACP] + phosphate = an acyl phosphate + holo-[ACP]. The protein operates within lipid metabolism; phospholipid metabolism. In terms of biological role, catalyzes the reversible formation of acyl-phosphate (acyl-PO(4)) from acyl-[acyl-carrier-protein] (acyl-ACP). This enzyme utilizes acyl-ACP as fatty acyl donor, but not acyl-CoA. The sequence is that of Phosphate acyltransferase from Pelotomaculum thermopropionicum (strain DSM 13744 / JCM 10971 / SI).